We begin with the raw amino-acid sequence, 81 residues long: Acyl carrier protein (81 aa).

One can recognise a Carrier domain in the interval alanine 2 to lysine 77. Serine 37 is modified (O-(pantetheine 4'-phosphoryl)serine).

Belongs to the acyl carrier protein (ACP) family. 4'-phosphopantetheine is transferred from CoA to a specific serine of apo-ACP by AcpS. This modification is essential for activity because fatty acids are bound in thioester linkage to the sulfhydryl of the prosthetic group.

The protein resides in the cytoplasm. It participates in lipid metabolism; fatty acid biosynthesis. Carrier of the growing fatty acid chain in fatty acid biosynthesis. The sequence is that of Acyl carrier protein from Rhodopirellula baltica (strain DSM 10527 / NCIMB 13988 / SH1).